Reading from the N-terminus, the 429-residue chain is Glutamyl-tRNA reductase (429 aa).

Substrate contacts are provided by residues 50–53 (TCNR), Ser110, 115–117 (ETQ), and Gln121. The active-site Nucleophile is the Cys51. 190 to 195 (GAGEMA) lines the NADP(+) pocket.

It belongs to the glutamyl-tRNA reductase family. In terms of assembly, homodimer.

The enzyme catalyses (S)-4-amino-5-oxopentanoate + tRNA(Glu) + NADP(+) = L-glutamyl-tRNA(Glu) + NADPH + H(+). It functions in the pathway porphyrin-containing compound metabolism; protoporphyrin-IX biosynthesis; 5-aminolevulinate from L-glutamyl-tRNA(Glu): step 1/2. Functionally, catalyzes the NADPH-dependent reduction of glutamyl-tRNA(Glu) to glutamate 1-semialdehyde (GSA). This chain is Glutamyl-tRNA reductase, found in Campylobacter hominis (strain ATCC BAA-381 / DSM 21671 / CCUG 45161 / LMG 19568 / NCTC 13146 / CH001A).